A 186-amino-acid chain; its full sequence is Elongation factor P (186 aa).

Belongs to the elongation factor P family.

It is found in the cytoplasm. It functions in the pathway protein biosynthesis; polypeptide chain elongation. Involved in peptide bond synthesis. Stimulates efficient translation and peptide-bond synthesis on native or reconstituted 70S ribosomes in vitro. Probably functions indirectly by altering the affinity of the ribosome for aminoacyl-tRNA, thus increasing their reactivity as acceptors for peptidyl transferase. This Mycoplasmopsis synoviae (strain 53) (Mycoplasma synoviae) protein is Elongation factor P.